A 72-amino-acid polypeptide reads, in one-letter code: Cell division protein ZapB (72 aa).

Positions 2–72 (SLEILDQLEG…RSLLGQIDNV (71 aa)) form a coiled coil. A disordered region spans residues 34 to 57 (NQQAQQANDELRSENEQLKGEHNN). The span at 42–57 (DELRSENEQLKGEHNN) shows a compositional bias: basic and acidic residues.

It belongs to the ZapB family. Homodimer. The ends of the coiled-coil dimer bind to each other, forming polymers. Interacts with FtsZ.

Its subcellular location is the cytoplasm. Non-essential, abundant cell division factor that is required for proper Z-ring formation. It is recruited early to the divisome by direct interaction with FtsZ, stimulating Z-ring assembly and thereby promoting cell division earlier in the cell cycle. Its recruitment to the Z-ring requires functional FtsA or ZipA. The sequence is that of Cell division protein ZapB from Mannheimia succiniciproducens (strain KCTC 0769BP / MBEL55E).